A 482-amino-acid polypeptide reads, in one-letter code: QWRF motif-containing protein 3 (482 aa).

The span at 1–20 shows a compositional bias: basic and acidic residues; sequence MKSCEHELLKTRRGKSREVS. Disordered stretches follow at residues 1–60 and 171–220; these read MKSC…GLKK and TAKP…QWAL. Low complexity predominate over residues 21–42; the sequence is SRFLSSPSASSSPNRRNSTSNS. The segment covering 191–219 has biased composition (polar residues); that stretch reads RTNSSKGIENRLQRNNSVSRYGSSMSQWA. The QWRF motif signature appears at 292–295; that stretch reads QWRF.

The protein belongs to the QWRF family.

The protein is QWRF motif-containing protein 3 (QWRF3) of Arabidopsis thaliana (Mouse-ear cress).